The primary structure comprises 85 residues: NAD(P)H-quinone oxidoreductase subunit L (85 aa).

Helical transmembrane passes span 17-37 (IVAVLYLGLSLLYLLIIPGFV) and 54-74 (AFMYFLMFFFFPGVLLLSPFL).

It belongs to the complex I NdhL subunit family. In terms of assembly, NDH-1 can be composed of about 15 different subunits; different subcomplexes with different compositions have been identified which probably have different functions.

The protein resides in the cellular thylakoid membrane. The catalysed reaction is a plastoquinone + NADH + (n+1) H(+)(in) = a plastoquinol + NAD(+) + n H(+)(out). It carries out the reaction a plastoquinone + NADPH + (n+1) H(+)(in) = a plastoquinol + NADP(+) + n H(+)(out). Its function is as follows. NDH-1 shuttles electrons from an unknown electron donor, via FMN and iron-sulfur (Fe-S) centers, to quinones in the respiratory and/or the photosynthetic chain. The immediate electron acceptor for the enzyme in this species is believed to be plastoquinone. Couples the redox reaction to proton translocation, and thus conserves the redox energy in a proton gradient. Cyanobacterial NDH-1 also plays a role in inorganic carbon-concentration. The sequence is that of NAD(P)H-quinone oxidoreductase subunit L from Crocosphaera subtropica (strain ATCC 51142 / BH68) (Cyanothece sp. (strain ATCC 51142)).